Consider the following 288-residue polypeptide: Protease HtpX (288 aa).

A run of 2 helical transmembrane segments spans residues 4–24 (VMLF…VLNI) and 36–56 (LSGL…ISLM). His143 is a Zn(2+) binding site. Glu144 is a catalytic residue. His147 contributes to the Zn(2+) binding site. 2 helical membrane passes run 151 to 171 (GDMV…IFLS) and 193 to 213 (MVYF…ASFI). Glu222 is a binding site for Zn(2+).

It belongs to the peptidase M48B family. Zn(2+) is required as a cofactor.

It localises to the cell inner membrane. This chain is Protease HtpX, found in Vibrio vulnificus (strain YJ016).